The sequence spans 239 residues: Superoxide dismutase 1 copper chaperone (239 aa).

The HMA domain maps to 7–70; the sequence is FYEATYAVPM…ALRDCGRDAI (64 aa). Cys-18 and Cys-21 together coordinate Cu cation. An intrachain disulfide couples Cys-28 to Cys-65. Asp-163 is a Zn(2+) binding site. The Cu cation site is built by Cys-219 and Cys-221.

The protein belongs to the CCS1 family. Requires Cu(2+) as cofactor.

The protein localises to the cytoplasm. Copper chaperone for superoxide dismutase 1 (SOD1). Binds copper ions and delivers them specifically to SOD1. The sequence is that of Superoxide dismutase 1 copper chaperone (CCS1) from Candida glabrata (strain ATCC 2001 / BCRC 20586 / JCM 3761 / NBRC 0622 / NRRL Y-65 / CBS 138) (Yeast).